Reading from the N-terminus, the 879-residue chain is Alanine--tRNA ligase (879 aa).

Residues histidine 566, histidine 570, cysteine 668, and histidine 672 each contribute to the Zn(2+) site.

It belongs to the class-II aminoacyl-tRNA synthetase family. Zn(2+) is required as a cofactor.

It is found in the cytoplasm. It carries out the reaction tRNA(Ala) + L-alanine + ATP = L-alanyl-tRNA(Ala) + AMP + diphosphate. Catalyzes the attachment of alanine to tRNA(Ala) in a two-step reaction: alanine is first activated by ATP to form Ala-AMP and then transferred to the acceptor end of tRNA(Ala). Also edits incorrectly charged Ser-tRNA(Ala) and Gly-tRNA(Ala) via its editing domain. The chain is Alanine--tRNA ligase from Clostridium perfringens (strain 13 / Type A).